Here is a 591-residue protein sequence, read N- to C-terminus: Probable indole-3-acetic acid-amido synthetase GH3.11 (591 aa).

Belongs to the IAA-amido conjugating enzyme family. In terms of tissue distribution, expressed in etiolated and green seedlings, roots, callus and highly in flowers.

May catalyze the synthesis of indole-3-acetic acid (IAA)-amino acid conjugates, providing a mechanism for the plant to cope with the presence of excess auxin. The protein is Probable indole-3-acetic acid-amido synthetase GH3.11 (GH3.11) of Oryza sativa subsp. japonica (Rice).